We begin with the raw amino-acid sequence, 217 residues long: Large ribosomal subunit protein uL1 (217 aa).

The protein belongs to the universal ribosomal protein uL1 family. Part of the 50S ribosomal subunit.

Its function is as follows. Binds directly to 23S rRNA. Probably involved in E site tRNA release. Functionally, protein L1 is also a translational repressor protein, it controls the translation of its operon by binding to its mRNA. The sequence is that of Large ribosomal subunit protein uL1 from Thermoplasma acidophilum (strain ATCC 25905 / DSM 1728 / JCM 9062 / NBRC 15155 / AMRC-C165).